Consider the following 237-residue polypeptide: Small ribosomal subunit protein uS3 (237 aa).

In terms of domain architecture, KH type-2 spans 17-86 (VERHLGHELK…SPQIEVQQVD (70 aa)).

It belongs to the universal ribosomal protein uS3 family. As to quaternary structure, part of the 30S ribosomal subunit.

Its function is as follows. Binds the lower part of the 30S subunit head. This is Small ribosomal subunit protein uS3 from Methanospirillum hungatei JF-1 (strain ATCC 27890 / DSM 864 / NBRC 100397 / JF-1).